The following is a 297-amino-acid chain: Phosphatidylserine decarboxylase proenzyme (297 aa).

Active-site charge relay system; for autoendoproteolytic cleavage activity residues include Asp92, His149, and Ser254. Ser254 acts as the Schiff-base intermediate with substrate; via pyruvic acid; for decarboxylase activity in catalysis. Ser254 is subject to Pyruvic acid (Ser); by autocatalysis.

Belongs to the phosphatidylserine decarboxylase family. PSD-B subfamily. Prokaryotic type I sub-subfamily. Heterodimer of a large membrane-associated beta subunit and a small pyruvoyl-containing alpha subunit. Requires pyruvate as cofactor. Is synthesized initially as an inactive proenzyme. Formation of the active enzyme involves a self-maturation process in which the active site pyruvoyl group is generated from an internal serine residue via an autocatalytic post-translational modification. Two non-identical subunits are generated from the proenzyme in this reaction, and the pyruvate is formed at the N-terminus of the alpha chain, which is derived from the carboxyl end of the proenzyme. The autoendoproteolytic cleavage occurs by a canonical serine protease mechanism, in which the side chain hydroxyl group of the serine supplies its oxygen atom to form the C-terminus of the beta chain, while the remainder of the serine residue undergoes an oxidative deamination to produce ammonia and the pyruvoyl prosthetic group on the alpha chain. During this reaction, the Ser that is part of the protease active site of the proenzyme becomes the pyruvoyl prosthetic group, which constitutes an essential element of the active site of the mature decarboxylase.

The protein resides in the cell membrane. It catalyses the reaction a 1,2-diacyl-sn-glycero-3-phospho-L-serine + H(+) = a 1,2-diacyl-sn-glycero-3-phosphoethanolamine + CO2. It functions in the pathway phospholipid metabolism; phosphatidylethanolamine biosynthesis; phosphatidylethanolamine from CDP-diacylglycerol: step 2/2. Functionally, catalyzes the formation of phosphatidylethanolamine (PtdEtn) from phosphatidylserine (PtdSer). In Bordetella parapertussis (strain 12822 / ATCC BAA-587 / NCTC 13253), this protein is Phosphatidylserine decarboxylase proenzyme.